We begin with the raw amino-acid sequence, 1279 residues long: ATP-dependent helicase/nuclease subunit A (1279 aa).

Residues 4 to 499 enclose the UvrD-like helicase ATP-binding domain; that stretch reads TKWTDEQRQA…VKLFKNFRSR (496 aa). Residue 25 to 32 participates in ATP binding; the sequence is AGAGAGKT. The region spanning 526 to 853 is the UvrD-like helicase C-terminal domain; the sequence is EEALKVGASY…RIMSIHKSKG (328 aa).

It belongs to the helicase family. AddA subfamily. As to quaternary structure, heterodimer of AddA and AddB/RexB. Mg(2+) is required as a cofactor.

The catalysed reaction is Couples ATP hydrolysis with the unwinding of duplex DNA by translocating in the 3'-5' direction.. It carries out the reaction ATP + H2O = ADP + phosphate + H(+). In terms of biological role, the heterodimer acts as both an ATP-dependent DNA helicase and an ATP-dependent, dual-direction single-stranded exonuclease. Recognizes the chi site generating a DNA molecule suitable for the initiation of homologous recombination. The AddA nuclease domain is required for chi fragment generation; this subunit has the helicase and 3' -&gt; 5' nuclease activities. This chain is ATP-dependent helicase/nuclease subunit A, found in Clostridium botulinum (strain ATCC 19397 / Type A).